The primary structure comprises 1076 residues: DNA-directed RNA polymerase subunit beta (1076 aa).

It belongs to the RNA polymerase beta chain family. In plastids the minimal PEP RNA polymerase catalytic core is composed of four subunits: alpha, beta, beta', and beta''. When a (nuclear-encoded) sigma factor is associated with the core the holoenzyme is formed, which can initiate transcription.

The protein localises to the plastid. It localises to the chloroplast. The enzyme catalyses RNA(n) + a ribonucleoside 5'-triphosphate = RNA(n+1) + diphosphate. DNA-dependent RNA polymerase catalyzes the transcription of DNA into RNA using the four ribonucleoside triphosphates as substrates. This is DNA-directed RNA polymerase subunit beta from Lolium perenne (Perennial ryegrass).